A 146-amino-acid polypeptide reads, in one-letter code: Protein archease (146 aa).

Ca(2+) is bound by residues D16, D145, and I146.

It belongs to the archease family.

Activates the tRNA-splicing ligase complex by facilitating the enzymatic turnover of catalytic subunit RtcB. Acts by promoting the guanylylation of RtcB, a key intermediate step in tRNA ligation. Can also alter the NTP specificity of RtcB such that ATP, dGTP or ITP is used efficiently. In Methanosarcina acetivorans (strain ATCC 35395 / DSM 2834 / JCM 12185 / C2A), this protein is Protein archease.